Consider the following 505-residue polypeptide: Activin receptor type-1B (505 aa).

Positions 1-23 (MAESAGASSFFPLVVLLLAGSGG) are cleaved as a signal peptide. Topologically, residues 24-126 (SGPRGVQALL…EHPSMWGPVE (103 aa)) are extracellular. N43 carries an N-linked (GlcNAc...) asparagine glycan. Residues 127-149 (LVGIIAGPVFLLFLIIIIVFLVI) form a helical membrane-spanning segment. Residues 150–505 (NYHQRVYHNR…QLSVQEDVKI (356 aa)) are Cytoplasmic-facing. The region spanning 177–206 (KTLQDLVYDLSTSGSGSGLPLFVQRTVART) is the GS domain. The Protein kinase domain maps to 207 to 497 (IVLQEIIGKG…LRIKKTLSQL (291 aa)). Residues 213-221 (IGKGRFGEV) and K234 each bind ATP. Residue D335 is the Proton acceptor of the active site. At Y380 the chain carries Phosphotyrosine.

Belongs to the protein kinase superfamily. TKL Ser/Thr protein kinase family. TGFB receptor subfamily. Forms an activin receptor complex with activin receptor type-2 (ACVR2A or ACVR2B). Part of a complex consisting of MAGI2/ARIP1, ACVR2A, ACVR1B and SMAD3. Interacts with SMAD2 and SMAD3. Interacts with SMAD7. Interacts with FKBP1A. Interacts with IGSF1. Interacts with CRIPTO. Interacts with TDP2. Interacts with TSC22D1/TSC-22. The cofactor is Mg(2+). Mn(2+) is required as a cofactor. Post-translationally, autophosphorylated. Phosphorylated by activin receptor type-2 (ACVR2A or ACVR2B) in response to activin-binding at serine and threonine residues in the GS domain. Phosphorylation of ACVR1B by activin receptor type-2 regulates association with SMAD7. In terms of processing, ubiquitinated. Level of ubiquitination is regulated by the SMAD7-SMURF1 complex. Ubiquitinated. Expressed in many tissues, most strongly in kidney, pancreas, brain, lung, and liver.

The protein resides in the cell membrane. It catalyses the reaction L-threonyl-[receptor-protein] + ATP = O-phospho-L-threonyl-[receptor-protein] + ADP + H(+). The catalysed reaction is L-seryl-[receptor-protein] + ATP = O-phospho-L-seryl-[receptor-protein] + ADP + H(+). Activin receptor type-2 (ACVR2A or ACVR2B) activates the type-1 receptor through phosphorylation of its regulatory GS domain. Its function is as follows. Transmembrane serine/threonine kinase activin type-1 receptor forming an activin receptor complex with activin receptor type-2 (ACVR2A or ACVR2B). Transduces the activin signal from the cell surface to the cytoplasm and is thus regulating a many physiological and pathological processes including neuronal differentiation and neuronal survival, hair follicle development and cycling, FSH production by the pituitary gland, wound healing, extracellular matrix production, immunosuppression and carcinogenesis. Activin is also thought to have a paracrine or autocrine role in follicular development in the ovary. Within the receptor complex, type-2 receptors (ACVR2A and/or ACVR2B) act as a primary activin receptors whereas the type-1 receptors like ACVR1B act as downstream transducers of activin signals. Activin binds to type-2 receptor at the plasma membrane and activates its serine-threonine kinase. The activated receptor type-2 then phosphorylates and activates the type-1 receptor such as ACVR1B. Once activated, the type-1 receptor binds and phosphorylates the SMAD proteins SMAD2 and SMAD3, on serine residues of the C-terminal tail. Soon after their association with the activin receptor and subsequent phosphorylation, SMAD2 and SMAD3 are released into the cytoplasm where they interact with the common partner SMAD4. This SMAD complex translocates into the nucleus where it mediates activin-induced transcription. Inhibitory SMAD7, which is recruited to ACVR1B through FKBP1A, can prevent the association of SMAD2 and SMAD3 with the activin receptor complex, thereby blocking the activin signal. Activin signal transduction is also antagonized by the binding to the receptor of inhibin-B via the IGSF1 inhibin coreceptor. ACVR1B also phosphorylates TDP2. The polypeptide is Activin receptor type-1B (ACVR1B) (Homo sapiens (Human)).